The sequence spans 214 residues: Reticulon-3-A (214 aa).

The disordered stretch occupies residues 1 to 21 (MAETSGPQSSHISSSSVGEKG). A Reticulon domain is found at 26–214 (VRDLLYWRDV…LPGALKKKSE (189 aa)). The next 2 membrane-spanning stretches (helical) occupy residues 46–66 (MVLLLSLAAFSIISVISYLVL) and 155–175 (VFNGITLLILGVLLTFTAPIV).

In terms of assembly, homodimer. In terms of tissue distribution, expressed in the animal hemisphere at the four-cell stage. During gastrulation, expression becomes restricted to the prospective neuroectoderm. At the early tail bud stage, expressed in the head structure. At the tadpole stage, expressed in head and neural tissues including the otic vesicle and optic nerve.

It localises to the endoplasmic reticulum membrane. The protein resides in the golgi apparatus membrane. In terms of biological role, may be involved in membrane trafficking in the early secretory pathway. In Xenopus laevis (African clawed frog), this protein is Reticulon-3-A (rtn3-a).